Consider the following 341-residue polypeptide: Glyceraldehyde-3-phosphate dehydrogenase (341 aa).

Residues threonine 11 to isoleucine 12 and glycine 110 each bind NAD(+). Position 139–141 (serine 139–asparagine 141) interacts with D-glyceraldehyde 3-phosphate. Cysteine 140 functions as the Nucleophile in the catalytic mechanism. Arginine 168 contacts NAD(+). Histidine 194–glycine 195 is a D-glyceraldehyde 3-phosphate binding site. Glutamine 302 is a binding site for NAD(+).

It belongs to the glyceraldehyde-3-phosphate dehydrogenase family. In terms of assembly, homotetramer.

Its subcellular location is the cytoplasm. The catalysed reaction is D-glyceraldehyde 3-phosphate + phosphate + NADP(+) = (2R)-3-phospho-glyceroyl phosphate + NADPH + H(+). The enzyme catalyses D-glyceraldehyde 3-phosphate + phosphate + NAD(+) = (2R)-3-phospho-glyceroyl phosphate + NADH + H(+). The protein operates within carbohydrate degradation; glycolysis; pyruvate from D-glyceraldehyde 3-phosphate: step 1/5. The chain is Glyceraldehyde-3-phosphate dehydrogenase from Methanoculleus marisnigri (strain ATCC 35101 / DSM 1498 / JR1).